A 397-amino-acid chain; its full sequence is Phosphoglycerate kinase (397 aa).

Substrate-binding positions include 21-23, Arg-36, 59-62, Arg-119, and Arg-152; these read DVN and HFGR. ATP is bound by residues Lys-202, Glu-324, and 354–357; that span reads GGDT.

The protein belongs to the phosphoglycerate kinase family. In terms of assembly, monomer.

It is found in the cytoplasm. The catalysed reaction is (2R)-3-phosphoglycerate + ATP = (2R)-3-phospho-glyceroyl phosphate + ADP. It functions in the pathway carbohydrate degradation; glycolysis; pyruvate from D-glyceraldehyde 3-phosphate: step 2/5. The polypeptide is Phosphoglycerate kinase (Cereibacter sphaeroides (strain ATCC 17029 / ATH 2.4.9) (Rhodobacter sphaeroides)).